The primary structure comprises 347 residues: F-box protein At2g14500 (347 aa).

Residues 6–52 (PLTLSELPHDLLRNIFNRLSFADFHRATWNSISKQTAPPKTKSPWLI) enclose the F-box domain.

The chain is F-box protein At2g14500 from Arabidopsis thaliana (Mouse-ear cress).